The chain runs to 84 residues: Small ribosomal subunit protein uS17 (84 aa).

It belongs to the universal ribosomal protein uS17 family. Part of the 30S ribosomal subunit.

Its function is as follows. One of the primary rRNA binding proteins, it binds specifically to the 5'-end of 16S ribosomal RNA. In Vibrio cholerae serotype O1 (strain ATCC 39541 / Classical Ogawa 395 / O395), this protein is Small ribosomal subunit protein uS17.